The chain runs to 789 residues: Homocitrate dehydratase, mitochondrial (789 aa).

A mitochondrion-targeting transit peptide spans 1–14 (MLSSANRFYIKRHL). Residues Gln96 and 189-191 (DSH) contribute to the substrate site. Positions 385, 448, and 451 each coordinate [4Fe-4S] cluster. Residues Arg476, Arg481, Lys610, and 672 to 673 (AR) contribute to the substrate site.

Belongs to the aconitase/IPM isomerase family. [4Fe-4S] cluster serves as cofactor.

It is found in the mitochondrion. It carries out the reaction (2R)-homocitrate = cis-homoaconitate + H2O. Its pathway is amino-acid biosynthesis; L-lysine biosynthesis via AAA pathway; L-alpha-aminoadipate from 2-oxoglutarate: step 2/5. Catalyzes the reversible dehydration of (R)-homocitrate to cis-homoaconitate, a step in the alpha-aminoadipate pathway for lysine biosynthesis. The sequence is that of Homocitrate dehydratase, mitochondrial (ACO2) from Saccharomyces cerevisiae (strain ATCC 204508 / S288c) (Baker's yeast).